We begin with the raw amino-acid sequence, 298 residues long: DegV domain-containing protein UU535 (298 aa).

The region spanning 5–287 (FLIMTDSSTT…KGALGIQVIA (283 aa)) is the DegV domain. Residues Ser-65 and Ser-96 each contribute to the hexadecanoate site.

Its function is as follows. May bind long-chain fatty acids, such as palmitate, and may play a role in lipid transport or fatty acid metabolism. The chain is DegV domain-containing protein UU535 from Ureaplasma parvum serovar 3 (strain ATCC 700970).